The sequence spans 1171 residues: Zinc finger BED domain-containing protein 4 (1171 aa).

Residues 25–62 (EEEDDDGIPPDSLERMDFKSEQEDMKQTDSGGERAGLG) form a disordered region. Over residues 36-51 (SLERMDFKSEQEDMKQ) the composition is skewed to basic and acidic residues. Lysine 43 participates in a covalent cross-link: Glycyl lysine isopeptide (Lys-Gly) (interchain with G-Cter in SUMO2). BED-type zinc fingers lie at residues 115–172 (RKKS…LIQE) and 285–342 (RRRS…VLQE). The Zn(2+) site is built by cysteine 136, cysteine 139, histidine 160, histidine 165, cysteine 306, cysteine 309, histidine 330, and histidine 335. Residues 362 to 385 (LLPPEGELSSVSSSPVKPVRESPS) show a composition bias toward low complexity. The disordered stretch occupies residues 362-405 (LLPPEGELSSVSSSPVKPVRESPSASSSPDRLTEDLQSHLNPGD). 2 BED-type zinc fingers span residues 456 to 512 (RLKS…VGSQ) and 558 to 615 (KKTS…LKTE). Residues cysteine 477 and cysteine 480 each coordinate Zn(2+). Residue lysine 489 forms a Glycyl lysine isopeptide (Lys-Gly) (interchain with G-Cter in SUMO2) linkage. Zn(2+) is bound by residues histidine 500, histidine 505, cysteine 579, cysteine 582, histidine 603, and histidine 608. Residues 614-640 (TEVSETARPSSPDTRVPRGTELSGASS) form a disordered region. Residue serine 624 is modified to Phosphoserine. The interval 1086–1171 (LAYLEEEVLE…VNLPLIYFQY (86 aa)) is required for homodimerization and nuclear accumulation.

In terms of assembly, homodimer; via C-terminus. Interacts with MYH9. Interacts with SAFB/SAFB1. Expressed in testis, heart, lung, and weakly expressed in brain, liver, muscle, placenta and small intestine. Expressed in the retina, found in the cone photoreceptors, Mueller cells, cone pedicles and in the innermost retinal layer.

The protein localises to the nucleus. Its subcellular location is the cytoplasm. The protein resides in the photoreceptor inner segment. Its function is as follows. Transcriptional regulator that binds to poly-guanine tracts in gene promoters and activates transcription. Able to bind single- and double-stranded DNA and RNA. The chain is Zinc finger BED domain-containing protein 4 (ZBED4) from Homo sapiens (Human).